We begin with the raw amino-acid sequence, 303 residues long: Recombination-associated protein RdgC (303 aa).

This sequence belongs to the RdgC family.

It is found in the cytoplasm. The protein resides in the nucleoid. In terms of biological role, may be involved in recombination. In Aeromonas hydrophila subsp. hydrophila (strain ATCC 7966 / DSM 30187 / BCRC 13018 / CCUG 14551 / JCM 1027 / KCTC 2358 / NCIMB 9240 / NCTC 8049), this protein is Recombination-associated protein RdgC.